The following is a 330-amino-acid chain: Carbonic anhydrase (330 aa).

The segment at 1–109 is chloroplast transit peptide-like; that stretch reads MSAASAFAMN…AATRIDQITA (109 aa).

This sequence belongs to the beta-class carbonic anhydrase family.

The protein localises to the cytoplasm. The catalysed reaction is hydrogencarbonate + H(+) = CO2 + H2O. Its function is as follows. Reversible hydration of carbon dioxide. This is Carbonic anhydrase from Flaveria bidentis (Coastal plain yellowtops).